A 1533-amino-acid chain; its full sequence is Glycogen debranching enzyme (1533 aa).

Ser-64 bears the Phosphoserine mark. Active-site residues include Asp-527, His-530, and Asp-628.

Belongs to the glycogen debranching enzyme family. In terms of assembly, monomer. Interacts with NHLRC1/malin. Ubiquitinated.

The protein localises to the cytoplasm. The catalysed reaction is Transfers a segment of a (1-&gt;4)-alpha-D-glucan to a new position in an acceptor, which may be glucose or a (1-&gt;4)-alpha-D-glucan.. The enzyme catalyses Hydrolysis of (1-&gt;6)-alpha-D-glucosidic branch linkages in glycogen phosphorylase limit dextrin.. Functionally, multifunctional enzyme acting as 1,4-alpha-D-glucan:1,4-alpha-D-glucan 4-alpha-D-glycosyltransferase and amylo-1,6-glucosidase in glycogen degradation. The sequence is that of Glycogen debranching enzyme (AGL) from Canis lupus familiaris (Dog).